A 138-amino-acid chain; its full sequence is Putative pre-16S rRNA nuclease (138 aa).

This sequence belongs to the YqgF nuclease family.

The protein resides in the cytoplasm. Could be a nuclease involved in processing of the 5'-end of pre-16S rRNA. The protein is Putative pre-16S rRNA nuclease of Bacteroides fragilis (strain ATCC 25285 / DSM 2151 / CCUG 4856 / JCM 11019 / LMG 10263 / NCTC 9343 / Onslow / VPI 2553 / EN-2).